We begin with the raw amino-acid sequence, 83 residues long: Mu-theraphotoxin-Hhn2e (83 aa).

The N-terminal stretch at 1 to 21 (MKASMFLALAGLVLLFVVGYA) is a signal peptide. Residues 22–48 (SESEEKEFPRELLSKIFAVDDFKGEER) constitute a propeptide that is removed on maturation. 3 cysteine pairs are disulfide-bonded: Cys-50–Cys-65, Cys-57–Cys-70, and Cys-64–Cys-77. Leu-81 carries the post-translational modification Leucine amide.

It belongs to the neurotoxin 10 (Hwtx-1) family. 15 (Hntx-3) subfamily. In terms of assembly, monomer. Expressed by the venom gland.

It localises to the secreted. Its function is as follows. Lethal neurotoxin. Selectively blocks tetrodotoxin-sensitive voltage-gated sodium channels (Nav). Does not affect tetrodotoxin-resistant voltage-gated sodium channels or calcium channels. The polypeptide is Mu-theraphotoxin-Hhn2e (Cyriopagopus hainanus (Chinese bird spider)).